We begin with the raw amino-acid sequence, 644 residues long: DNA mismatch repair protein MutL (644 aa).

Positions 336–400 (ERPFEPSSPQ…EISRDSSLGE (65 aa)) are disordered. Residues 373–400 (SKTHSTWDEASRVDTSRAEISRDSSLGE) show a composition bias toward basic and acidic residues.

The protein belongs to the DNA mismatch repair MutL/HexB family.

Its function is as follows. This protein is involved in the repair of mismatches in DNA. It is required for dam-dependent methyl-directed DNA mismatch repair. May act as a 'molecular matchmaker', a protein that promotes the formation of a stable complex between two or more DNA-binding proteins in an ATP-dependent manner without itself being part of a final effector complex. This Shewanella sp. (strain MR-7) protein is DNA mismatch repair protein MutL.